The sequence spans 332 residues: Probable farnesyl diphosphate synthase (332 aa).

Isopentenyl diphosphate contacts are provided by lysine 75, arginine 78, and histidine 107. Mg(2+) contacts are provided by aspartate 114 and aspartate 120. Arginine 125 lines the (2E)-geranyl diphosphate pocket. Arginine 126 provides a ligand contact to isopentenyl diphosphate. Positions 208, 250, and 267 each coordinate (2E)-geranyl diphosphate.

The protein belongs to the FPP/GGPP synthase family. Mg(2+) is required as a cofactor.

Its subcellular location is the cytoplasm. The enzyme catalyses isopentenyl diphosphate + (2E)-geranyl diphosphate = (2E,6E)-farnesyl diphosphate + diphosphate. The polypeptide is Probable farnesyl diphosphate synthase (Sinorhizobium fredii (strain NBRC 101917 / NGR234)).